The sequence spans 310 residues: Homoserine kinase (310 aa).

Position 91–101 (91–101 (PIGSGLGSSAC)) interacts with ATP.

The protein belongs to the GHMP kinase family. Homoserine kinase subfamily.

The protein localises to the cytoplasm. It catalyses the reaction L-homoserine + ATP = O-phospho-L-homoserine + ADP + H(+). It participates in amino-acid biosynthesis; L-threonine biosynthesis; L-threonine from L-aspartate: step 4/5. Its function is as follows. Catalyzes the ATP-dependent phosphorylation of L-homoserine to L-homoserine phosphate. The protein is Homoserine kinase of Escherichia coli O6:H1 (strain CFT073 / ATCC 700928 / UPEC).